Here is a 1200-residue protein sequence, read N- to C-terminus: Hyalin (1200 aa).

15 consecutive HYR domains span residues 1-39 (SSHN…TVTA), 40-123 (TDTT…NVIE), 124-207 (VDTT…NVIE), 208-292 (VDTT…NVIE), 293-376 (VDTT…NVVE), 377-460 (VDTT…NVVE), 461-544 (VDTT…TVEE), 546-629 (VDTT…TVIA), 630-713 (VDTT…TISA), 714-797 (VDTT…VINA), 798-881 (VDTT…TIGT), 882-966 (VDTM…TVFA), 967-1050 (VDTT…TVTA), 1051-1133 (QDTT…TVNT), and 1134-1200 (QDTT…FFSD).

Homooligomer in presence of calcium. Post-translationally, glycosylated.

Its subcellular location is the secreted. It is found in the extracellular space. The protein localises to the extracellular matrix. Its function is as follows. Major constituent of the hyaline layer. The hyaline layer of echinoderm embryos is an extraembryonic matrix that functions as a substrate for cell adhesion through early development. The protein is Hyalin of Strongylocentrotus purpuratus (Purple sea urchin).